A 558-amino-acid polypeptide reads, in one-letter code: Glucose-6-phosphate isomerase (558 aa).

E362 functions as the Proton donor in the catalytic mechanism. Active-site residues include H393 and K523.

Belongs to the GPI family.

The protein localises to the cytoplasm. It carries out the reaction alpha-D-glucose 6-phosphate = beta-D-fructose 6-phosphate. It participates in carbohydrate degradation; glycolysis; D-glyceraldehyde 3-phosphate and glycerone phosphate from D-glucose: step 2/4. The polypeptide is Glucose-6-phosphate isomerase (Pgi) (Drosophila simulans (Fruit fly)).